The following is a 100-amino-acid chain: Large ribosomal subunit protein bL27 (100 aa).

A propeptide spanning residues 1–9 is cleaved from the precursor; it reads MIIMNLQIF. Residues 13-32 are disordered; the sequence is KGMGSSKNGRDSESKRLGTK.

Belongs to the bacterial ribosomal protein bL27 family. Post-translationally, the N-terminus is cleaved by ribosomal processing cysteine protease Prp.

The chain is Large ribosomal subunit protein bL27 from Clostridium kluyveri (strain ATCC 8527 / DSM 555 / NBRC 12016 / NCIMB 10680 / K1).